The following is a 347-amino-acid chain: Putative coenzyme F420-dependent oxidoreductase Rv3520c (347 aa).

This Mycobacterium tuberculosis (strain ATCC 25618 / H37Rv) protein is Putative coenzyme F420-dependent oxidoreductase Rv3520c.